Reading from the N-terminus, the 168-residue chain is Transcriptional regulator MraZ (168 aa).

SpoVT-AbrB domains are found at residues 8–51 (EYNQ…GGDR) and 90–140 (ALNM…KADT).

The protein belongs to the MraZ family. Forms oligomers.

It is found in the cytoplasm. Its subcellular location is the nucleoid. The sequence is that of Transcriptional regulator MraZ from Cereibacter sphaeroides (strain ATCC 17025 / ATH 2.4.3) (Rhodobacter sphaeroides).